The primary structure comprises 293 residues: Pyridoxal 5'-phosphate synthase subunit PdxS (293 aa).

A D-ribose 5-phosphate-binding site is contributed by D23. The Schiff-base intermediate with D-ribose 5-phosphate role is filled by K80. G152 is a binding site for D-ribose 5-phosphate. R164 contacts D-glyceraldehyde 3-phosphate. D-ribose 5-phosphate is bound by residues G213 and 234-235 (GS).

The protein belongs to the PdxS/SNZ family. In terms of assembly, in the presence of PdxT, forms a dodecamer of heterodimers.

The catalysed reaction is aldehydo-D-ribose 5-phosphate + D-glyceraldehyde 3-phosphate + L-glutamine = pyridoxal 5'-phosphate + L-glutamate + phosphate + 3 H2O + H(+). Its pathway is cofactor biosynthesis; pyridoxal 5'-phosphate biosynthesis. In terms of biological role, catalyzes the formation of pyridoxal 5'-phosphate from ribose 5-phosphate (RBP), glyceraldehyde 3-phosphate (G3P) and ammonia. The ammonia is provided by the PdxT subunit. Can also use ribulose 5-phosphate and dihydroxyacetone phosphate as substrates, resulting from enzyme-catalyzed isomerization of RBP and G3P, respectively. This Chloroflexus aurantiacus (strain ATCC 29366 / DSM 635 / J-10-fl) protein is Pyridoxal 5'-phosphate synthase subunit PdxS.